The following is a 513-amino-acid chain: Carotenoid isomerooxygenase (513 aa).

Residues His184, His242, His312, and His503 each contribute to the Fe cation site.

Belongs to the carotenoid oxygenase family. The cofactor is Fe(2+).

It catalyses the reaction all-trans-zeaxanthin + O2 = (3R)-11-cis-3-hydroxyretinal + (3R)-all-trans-3-hydroxyretinal. It participates in cofactor metabolism; retinol metabolism. In terms of biological role, catalyzes the oxidative cleavage at the 15,15'-double bond of carotenoids and the simultaneous all-trans to 11-cis isomerization of one cleavage product. Carotenoids like 11-cis retinal can promote visual pigment biogenesis in the dark. Essential for the biosynthesis of the 3-hydroxyretinal chromophore of rhodopsin from zeaxanthin and for proper photoreceptor development. The chain is Carotenoid isomerooxygenase (ninaB) from Galleria mellonella (Greater wax moth).